The primary structure comprises 471 residues: MKKMTLFTLSLLATAVQVGAQEYVPIVEKPIYITSSKIKCVLHTSGDFNATRDWCNAGASIDVRVNVAQMRSVQSATSDGFTPDAKIVRFTVDADKPGTGIHLVNELQQDHSWFQSWANRRTYIGPFASSYDLWVKPVSGYTPKKARDLPQNENKNYQHRDTYGYSIGINGKVGAEVNKDGPKVGGEVSGSFTYNYSKTLVFDTKDYRINNRSSLSDFDISFEREFGECDELRRQELGCYFTAAHWGSGWVFDKTKFNPISYSNFKPNYDVLYEAPVSETGVTDFEMGVKLNYRARFGTVLPSALFSVYGSAGSSTNSSTVKQRIRIDWNHPLFEAEAHVTLQSLSNNDLCLDVYGENGDKTVAGGSVNGWSCHGSWNQVWGLDKEERYRSRVASDRCLTVNADKTLTVEQCGANLAQKWYWEGDKLISRYVDGNNTRYLLNIVGGRNVQVTPENEANQARWKPTLQQVKL.

Residues 1 to 20 (MKKMTLFTLSLLATAVQVGA) form the signal peptide. The Ricin B-type lectin domain occupies 338–465 (AHVTLQSLSN…EANQARWKPT (128 aa)).

The protein belongs to the HlyA hemolysin family.

Bacterial hemolysins are exotoxins that attack blood cell membranes and cause cell rupture by mechanisms not clearly defined. The sequence is that of Cytolysin (vvhA) from Vibrio vulnificus (strain CMCP6).